A 180-amino-acid polypeptide reads, in one-letter code: ATP synthase subunit b 2 (180 aa).

Residues 33 to 53 (IFWLLVTLVAIYFLLTRVALP) traverse the membrane as a helical segment.

The protein belongs to the ATPase B chain family. As to quaternary structure, F-type ATPases have 2 components, F(1) - the catalytic core - and F(0) - the membrane proton channel. F(1) has five subunits: alpha(3), beta(3), gamma(1), delta(1), epsilon(1). F(0) has three main subunits: a(1), b(2) and c(10-14). The alpha and beta chains form an alternating ring which encloses part of the gamma chain. F(1) is attached to F(0) by a central stalk formed by the gamma and epsilon chains, while a peripheral stalk is formed by the delta and b chains.

The protein localises to the cell inner membrane. F(1)F(0) ATP synthase produces ATP from ADP in the presence of a proton or sodium gradient. F-type ATPases consist of two structural domains, F(1) containing the extramembraneous catalytic core and F(0) containing the membrane proton channel, linked together by a central stalk and a peripheral stalk. During catalysis, ATP synthesis in the catalytic domain of F(1) is coupled via a rotary mechanism of the central stalk subunits to proton translocation. Its function is as follows. Component of the F(0) channel, it forms part of the peripheral stalk, linking F(1) to F(0). The b'-subunit is a diverged and duplicated form of b found in plants and photosynthetic bacteria. The protein is ATP synthase subunit b 2 (atpF2) of Cereibacter sphaeroides (strain ATCC 17029 / ATH 2.4.9) (Rhodobacter sphaeroides).